The following is a 548-amino-acid chain: uncharacterized protein (548 aa).

Short-chain dehydrogenase/reductase regions lie at residues 1-250 (MDDR…WMSV) and 271-548 (PVED…LLSP). Residue 12 to 37 (IVVTGAAGGIGRALVDIFAANGDVVV) participates in NADP(+) binding. Serine 141 serves as a coordination point for substrate. Tyrosine 154 functions as the Proton acceptor in the catalytic mechanism. Position 280–304 (280–304 (VIVMGGATGVGAAIARRFAENGDTV)) interacts with NADP(+). Catalysis depends on tyrosine 420, which acts as the Proton acceptor.

Belongs to the short-chain dehydrogenases/reductases (SDR) family.

This is an uncharacterized protein from Sinorhizobium fredii (strain NBRC 101917 / NGR234).